The following is a 301-amino-acid chain: Lipoyl synthase (301 aa).

[4Fe-4S] cluster contacts are provided by Cys-50, Cys-55, Cys-61, Cys-76, Cys-80, Cys-83, and Ser-289. The 217-residue stretch at 62-278 (WNHRTATFLL…RRYALERGFR (217 aa)) folds into the Radical SAM core domain.

Belongs to the radical SAM superfamily. Lipoyl synthase family. [4Fe-4S] cluster serves as cofactor.

It is found in the cytoplasm. It carries out the reaction [[Fe-S] cluster scaffold protein carrying a second [4Fe-4S](2+) cluster] + N(6)-octanoyl-L-lysyl-[protein] + 2 oxidized [2Fe-2S]-[ferredoxin] + 2 S-adenosyl-L-methionine + 4 H(+) = [[Fe-S] cluster scaffold protein] + N(6)-[(R)-dihydrolipoyl]-L-lysyl-[protein] + 4 Fe(3+) + 2 hydrogen sulfide + 2 5'-deoxyadenosine + 2 L-methionine + 2 reduced [2Fe-2S]-[ferredoxin]. The protein operates within protein modification; protein lipoylation via endogenous pathway; protein N(6)-(lipoyl)lysine from octanoyl-[acyl-carrier-protein]: step 2/2. Functionally, catalyzes the radical-mediated insertion of two sulfur atoms into the C-6 and C-8 positions of the octanoyl moiety bound to the lipoyl domains of lipoate-dependent enzymes, thereby converting the octanoylated domains into lipoylated derivatives. This Roseiflexus sp. (strain RS-1) protein is Lipoyl synthase.